We begin with the raw amino-acid sequence, 81 residues long: Acyl carrier protein (81 aa).

The 76-residue stretch at 4 to 79 (QEIFEKVQTI…QAVDFISQKV (76 aa)) folds into the Carrier domain. Position 39 is an O-(pantetheine 4'-phosphoryl)serine (serine 39).

The protein belongs to the acyl carrier protein (ACP) family. Post-translationally, 4'-phosphopantetheine is transferred from CoA to a specific serine of apo-ACP by AcpS. This modification is essential for activity because fatty acids are bound in thioester linkage to the sulfhydryl of the prosthetic group.

The protein resides in the plastid. It localises to the chloroplast. The protein operates within lipid metabolism; fatty acid biosynthesis. Its function is as follows. Carrier of the growing fatty acid chain in fatty acid biosynthesis. In Guillardia theta (Cryptophyte), this protein is Acyl carrier protein.